We begin with the raw amino-acid sequence, 311 residues long: GTP cyclohydrolase FolE2 (311 aa).

The protein belongs to the GTP cyclohydrolase IV family.

The enzyme catalyses GTP + H2O = 7,8-dihydroneopterin 3'-triphosphate + formate + H(+). Its pathway is cofactor biosynthesis; 7,8-dihydroneopterin triphosphate biosynthesis; 7,8-dihydroneopterin triphosphate from GTP: step 1/1. In terms of biological role, converts GTP to 7,8-dihydroneopterin triphosphate. This is GTP cyclohydrolase FolE2 from Hydrogenovibrio crunogenus (strain DSM 25203 / XCL-2) (Thiomicrospira crunogena).